Here is a 453-residue protein sequence, read N- to C-terminus: DDB1- and CUL4-associated factor 12 (453 aa).

Positions 1–12 (MARKAVSRKRKA) are enriched in basic residues. Residues 1-34 (MARKAVSRKRKASASPGAGSDAQGPQFGWDHSLH) form a disordered region. Positions 1-38 (MARKAVSRKRKASASPGAGSDAQGPQFGWDHSLHKRKR) are required for nuclear location and interaction with MOV10. Serine 15 carries the post-translational modification Phosphoserine. 4 WD repeats span residues 138–178 (QQGC…PVCV), 182–220 (GHKD…LTKS), 250–289 (PDNC…SKLL), and 338–375 (ERGS…FLEE).

Belongs to the WD repeat DCAF12 family. As to quaternary structure, component of the DCX(DCAF12) E3 ubiquitin ligase complex, at least composed of CUL4 (CUL4A or CUL4B), DDB1, DCAF12 and RBX1.

It is found in the cytoplasm. The protein resides in the cytoskeleton. Its subcellular location is the microtubule organizing center. The protein localises to the centrosome. It localises to the nucleus. The protein operates within protein modification; protein ubiquitination. Substrate-recognition component of a DCX (DDB1-CUL4-X-box) E3 ubiquitin-protein ligase complex of the DesCEND (destruction via C-end degrons) pathway, which recognizes a C-degron located at the extreme C terminus of target proteins, leading to their ubiquitination and degradation. The C-degron recognized by the DesCEND pathway is usually a motif of less than ten residues and can be present in full-length proteins, truncated proteins or proteolytically cleaved forms. The DCX(DCAF12) complex specifically recognizes proteins with a diglutamate (Glu-Glu) at the C-terminus, such as MAGEA3, MAGEA6 and CCT5, leading to their ubiquitination and degradation. Ubiquitination of MAGEA3, MAGEA6 by DCX(DCAF12) complex is required for starvation-induced autophagy. Also directly recognizes the C-terminal glutamate-leucine (Glu-Leu) degron as an alternative degron in proteins such as MOV10, leading to their ubiquitination and degradation. Controls the protein level of MOV10 during spermatogenesis and in T cells, especially after their activation. This chain is DDB1- and CUL4-associated factor 12, found in Mus musculus (Mouse).